The sequence spans 381 residues: uncharacterized protein (381 aa).

A run of 11 helical transmembrane segments spans residues 10–29, 75–93, 98–117, 130–147, 157–179, 199–221, 236–255, 262–284, 289–311, 323–340, and 355–374; these read IFFS…INFY, IILI…LIIL, LIKI…FTSR, YLFL…NLMV, TNNT…FLHY, IELQ…WYYE, LILK…ICYI, YFAN…IHGT, NILY…ILIL, ALLS…AGAL, and LFSV…WYFI.

It localises to the cell membrane. This is an uncharacterized protein from Rickettsia prowazekii (strain Madrid E).